Consider the following 799-residue polypeptide: Zinc finger protein 227 (799 aa).

In terms of domain architecture, KRAB spans 23–94 (VTFKDVAVVF…ETETQRSSKH (72 aa)). 19 C2H2-type zinc fingers span residues 250 to 272 (HPCG…PNVH), 269 to 291 (PNVH…QRIH), 324 to 346 (YRCD…YRTH), 352 to 374 (YKCE…QRVH), 380 to 402 (YKCE…QRVH), 408 to 430 (YKCE…QRVH), 436 to 458 (YKCD…RRVH), 464 to 486 (YKCE…FRVH), 492 to 514 (YKCK…QNVH), 520 to 542 (FKCE…QRVH), 548 to 570 (YRCD…QVIH), 576 to 598 (YKCE…QRVH), 604 to 626 (YKCE…QRVH), 632 to 654 (YKCG…QRVH), 660 to 682 (YKCD…QRGH), 688 to 710 (YKCE…QRVH), 716 to 738 (HICE…LGVH), 744 to 766 (FKCE…QRVH), and 772 to 794 (YKCD…QKVH).

Belongs to the krueppel C2H2-type zinc-finger protein family.

It is found in the nucleus. May be involved in transcriptional regulation. The protein is Zinc finger protein 227 (ZNF227) of Homo sapiens (Human).